The chain runs to 427 residues: Pre-mRNA-splicing factor PRP46 (427 aa).

WD repeat units follow at residues 113–153 (GHHG…LKVT), 156–195 (AHDM…AIRN), 198–237 (GHLS…PVMT), 240–281 (GHKG…KVLT), 283–322 (HQRT…TNFV), 324–362 (QDLD…KYQT), and 373–412 (ESER…SQDT). The interval 404–427 (QDETASQDTHPNLPWNPKLDSQRL) is disordered.

The protein belongs to the WD repeat PRL1/PRL2 family. Associated with the spliceosome.

The protein resides in the cytoplasm. It localises to the nucleus. Involved in pre-mRNA splicing and required for cell cycle progression at G2/M. This Candida glabrata (strain ATCC 2001 / BCRC 20586 / JCM 3761 / NBRC 0622 / NRRL Y-65 / CBS 138) (Yeast) protein is Pre-mRNA-splicing factor PRP46 (PRP46).